Here is a 1261-residue protein sequence, read N- to C-terminus: Myosin-1 (1261 aa).

The disordered stretch occupies residues 1-39 (MGHSRRPVGGEKKSRGFGRSKVADVGDGRQAGKPQVKKA). A Myosin motor domain is found at 49-728 (IGVSDLTLLS…TLFALEAMRD (680 aa)). An ATP-binding site is contributed by 142-149 (GESGAGKT). Serine 370 carries the post-translational modification Phosphoserine. The segment at 417–499 (SIGILDIYGF…PGVFAALNDA (83 aa)) is actin-binding. IQ domains are found at residues 732–752 (HNMAIRIQRAWRNYLRYRIEC) and 753–778 (AIRIQRFWRRTTGGLELLKVRDQGHQ). Positions 786–973 (RRRMSLLGSR…KSHTIHTSPG (188 aa)) constitute a TH1 domain. Disordered stretches follow at residues 956–1093 (ASPN…KALY) and 1139–1261 (YLEE…DDEW). 4 stretches are compositionally biased toward pro residues: residues 1019-1029 (RPTPKPQPLPQ), 1038-1052 (IPAPQPAAVPRPVPQ), 1072-1084 (APPPPPPASPPAP), and 1147-1159 (TPKPAPPPPPPAA). The region spanning 1084-1145 (PKKATAKALY…PQAYLEEQVA (62 aa)) is the SH3 domain. Over residues 1160–1181 (PRASPVPSANGAAATAAAAKAK) the composition is skewed to low complexity. Residues 1212-1233 (VSMNSQDSSGGSGRGTPNSTSN) are compositionally biased toward polar residues. The span at 1234-1243 (ASLAGGLAEA) shows a compositional bias: low complexity.

The protein belongs to the TRAFAC class myosin-kinesin ATPase superfamily. Myosin family. Post-translationally, phosphorylation of the TEDS site (Ser-370) is required for the polarization of the actin cytoskeleton. Phosphorylation probably activates the myosin-I ATPase activity.

It is found in the cytoplasm. Its subcellular location is the cytoskeleton. It localises to the actin patch. Functionally, type-I myosin implicated in the organization of the actin cytoskeleton. Required for proper actin cytoskeleton polarization. At the cell cortex, assembles in patch-like structures together with proteins from the actin-polymerizing machinery and promotes actin assembly. Functions as actin nucleation-promoting factor (NPF) for the Arp2/3 complex. Plays an important role in polarized growth, spore germination, hyphal morphogenesis, and septal wall formation. In Aspergillus oryzae (strain ATCC 42149 / RIB 40) (Yellow koji mold), this protein is Myosin-1 (myoA).